The primary structure comprises 377 residues: Bradyzoite pseudokinase 1 (377 aa).

The signal sequence occupies residues methionine 1 to glycine 26. A disordered region spans residues histidine 39–histidine 58. Residues threonine 48–phenylalanine 354 form the Protein kinase domain.

This sequence belongs to the protein kinase superfamily. STE Ser/Thr protein kinase family. WNG subfamily. Forms a complex composed of BPK1, MCP4, MAG1, GRA8 and GRA9. Interacts with MCP4. Interacts with MAG1. Interacts with GRA8. Interacts with GRA9.

It localises to the secreted. Required for the growth, maintenance, and/or stability, and thus infectivity, of bradyzoite cysts. This is Bradyzoite pseudokinase 1 from Toxoplasma gondii.